We begin with the raw amino-acid sequence, 62 residues long: MDARLLEILVCPLCKGPLDYLKDKQELVCKADRLAFPIRDGIPVMLEEEARALAAEDVDALR.

It belongs to the UPF0434 family.

The protein is UPF0434 protein azo1471 of Azoarcus sp. (strain BH72).